The following is a 539-amino-acid chain: uncharacterized protein (539 aa).

FAD is bound at residue 6–20; sequence LIIGGGGAAARAAIE. Catalysis depends on residues histidine 227 and arginine 243.

It belongs to the FAD-dependent oxidoreductase 2 family. FRD/SDH subfamily. FAD serves as cofactor.

This is an uncharacterized protein from Methanocaldococcus jannaschii (strain ATCC 43067 / DSM 2661 / JAL-1 / JCM 10045 / NBRC 100440) (Methanococcus jannaschii).